A 60-amino-acid polypeptide reads, in one-letter code: MIKNIRITQTRSSIGCLPKHKATLAGLGLRRIGHAVERQDNPVIQGMINLISYMVKVEKQ.

The protein belongs to the universal ribosomal protein uL30 family. In terms of assembly, part of the 50S ribosomal subunit.

This chain is Large ribosomal subunit protein uL30, found in Baumannia cicadellinicola subsp. Homalodisca coagulata.